The chain runs to 746 residues: Disintegrin and metalloproteinase domain-containing protein 18 (746 aa).

An N-terminal signal peptide occupies residues 1–16 (MFFLLALLTELGRLQA). Residues 17–183 (HVGSEGIFLH…QKKNLSKLLP (167 aa)) constitute a propeptide that is removed on maturation. 6 N-linked (GlcNAc...) asparagine glycosylation sites follow: Asn-36, Asn-122, Asn-149, Asn-156, Asn-177, and Asn-294. At 177–687 (NLSKLLPQYL…EKGYNAHWNN (511 aa)) the chain is on the extracellular side. In terms of domain architecture, Peptidase M12B spans 184–381 (QYLEIYIIVE…FEAKCLQKLS (198 aa)). Intrachain disulfides connect Cys-293-Cys-376, Cys-335-Cys-360, Cys-337-Cys-342, and Cys-450-Cys-471. N-linked (GlcNAc...) asparagine glycosylation is found at Asn-359, Asn-465, Asn-611, and Asn-625. The 90-residue stretch at 390–479 (QPVCGNGILE…DCVPDTYALN (90 aa)) folds into the Disintegrin domain. The 35-residue stretch at 620–654 (TGYNCNTTTKCKGKGICNNFGNCQCFPGHKPPDCK) folds into the EGF-like domain. Intrachain disulfides connect Cys-624-Cys-636, Cys-630-Cys-642, and Cys-644-Cys-653. A helical transmembrane segment spans residues 688 to 708 (WFILSFYIVLPFFIIFTIVIF). Topologically, residues 709 to 746 (KRNEIRKLCNRENTELIHPLYQKAMMWNINIAQNFRSK) are cytoplasmic.

The prodomain and the metalloprotease-like domain are cleaved during the epididymal maturation of the spermatozoa. In terms of tissue distribution, expressed predominantly in adult and prepubertal testis.

It localises to the membrane. In terms of biological role, sperm surface membrane protein that may be involved in spermatogenesis and fertilization. This is a non catalytic metalloprotease-like protein. This chain is Disintegrin and metalloproteinase domain-containing protein 18 (ADAM18), found in Macaca fascicularis (Crab-eating macaque).